Reading from the N-terminus, the 225-residue chain is Urease accessory protein UreE (225 aa).

The segment covering 171–215 has biased composition (basic and acidic residues); the sequence is HHGHEHSHDHEHGHSHAAHEHSHGHDHTHGHDHDHGDHVHDESCG. Positions 171 to 225 are disordered; that stretch reads HHGHEHSHDHEHGHSHAAHEHSHGHDHTHGHDHDHGDHVHDESCGHGHHHHHAHR. Residues 216–225 show a composition bias toward basic residues; that stretch reads HGHHHHHAHR.

It belongs to the UreE family.

Its subcellular location is the cytoplasm. In terms of biological role, involved in urease metallocenter assembly. Binds nickel. Probably functions as a nickel donor during metallocenter assembly. This Paraburkholderia xenovorans (strain LB400) protein is Urease accessory protein UreE.